Here is a 207-residue protein sequence, read N- to C-terminus: Peptidyl-tRNA hydrolase (207 aa).

Tyr19 is a binding site for tRNA. His24 acts as the Proton acceptor in catalysis. TRNA contacts are provided by Phe70, Asn72, and Asn118.

It belongs to the PTH family. In terms of assembly, monomer.

It localises to the cytoplasm. The catalysed reaction is an N-acyl-L-alpha-aminoacyl-tRNA + H2O = an N-acyl-L-amino acid + a tRNA + H(+). Hydrolyzes ribosome-free peptidyl-tRNAs (with 1 or more amino acids incorporated), which drop off the ribosome during protein synthesis, or as a result of ribosome stalling. In terms of biological role, catalyzes the release of premature peptidyl moieties from peptidyl-tRNA molecules trapped in stalled 50S ribosomal subunits, and thus maintains levels of free tRNAs and 50S ribosomes. The chain is Peptidyl-tRNA hydrolase from Synechococcus sp. (strain CC9311).